The following is a 161-amino-acid chain: Crossover junction endodeoxyribonuclease RuvC (161 aa).

Residues D7, E67, and D139 contribute to the active site. Residues D7, E67, and D139 each coordinate Mg(2+).

The protein belongs to the RuvC family. As to quaternary structure, homodimer which binds Holliday junction (HJ) DNA. The HJ becomes 2-fold symmetrical on binding to RuvC with unstacked arms; it has a different conformation from HJ DNA in complex with RuvA. In the full resolvosome a probable DNA-RuvA(4)-RuvB(12)-RuvC(2) complex forms which resolves the HJ. It depends on Mg(2+) as a cofactor.

It localises to the cytoplasm. The enzyme catalyses Endonucleolytic cleavage at a junction such as a reciprocal single-stranded crossover between two homologous DNA duplexes (Holliday junction).. Its function is as follows. The RuvA-RuvB-RuvC complex processes Holliday junction (HJ) DNA during genetic recombination and DNA repair. Endonuclease that resolves HJ intermediates. Cleaves cruciform DNA by making single-stranded nicks across the HJ at symmetrical positions within the homologous arms, yielding a 5'-phosphate and a 3'-hydroxyl group; requires a central core of homology in the junction. The consensus cleavage sequence is 5'-(A/T)TT(C/G)-3'. Cleavage occurs on the 3'-side of the TT dinucleotide at the point of strand exchange. HJ branch migration catalyzed by RuvA-RuvB allows RuvC to scan DNA until it finds its consensus sequence, where it cleaves and resolves the cruciform DNA. The protein is Crossover junction endodeoxyribonuclease RuvC of Syntrophotalea carbinolica (strain DSM 2380 / NBRC 103641 / GraBd1) (Pelobacter carbinolicus).